The following is a 388-amino-acid chain: Type II secretion system protein F (388 aa).

Residues 1–28 are disordered; sequence MTEGDSARQVRQQLREQGLTPLEVNETT. Residues 1 to 153 lie on the Cytoplasmic side of the membrane; that stretch reads MTEGDSARQV…HMRTKLLQAM (153 aa). Glutamate 79, asparagine 133, and aspartate 137 together coordinate Ca(2+). The helical transmembrane segment at 154-174 threads the bilayer; sequence IYPIVLTLVAVGVISILLTAV. At 175–205 the chain is on the periplasmic side; the sequence is VPKVVAQFEHMGQQLPATTRFLIGTSELMQH. Residues 206–226 form a helical membrane-spanning segment; the sequence is YGLWFLLLLFIGGFVWRWWLT. Over 227-350 the chain is Cytoplasmic; sequence DEKRRRHWHQ…QDREFETQVN (124 aa). A helical membrane pass occupies residues 351–371; it reads IALGVFEPLLVVSMAGVVLFI. The Periplasmic portion of the chain corresponds to 372-388; sequence VMSILQPILELNNMVNL.

It belongs to the GSP F family. In terms of assembly, type II secretion system is composed of four main components: the outer membrane complex, the inner membrane complex, the cytoplasmic secretion ATPase and the periplasm-spanning pseudopilus. Homodimer. Interacts with ExeE and ExeL components.

The protein resides in the cell inner membrane. Functionally, component of the type II secretion system inner membrane complex required for the energy-dependent secretion of extracellular factors such as proteases and toxins from the periplasm. The chain is Type II secretion system protein F (exeF) from Aeromonas hydrophila.